The primary structure comprises 354 residues: Ferrochelatase (354 aa).

His-214 and Glu-295 together coordinate Fe cation.

The protein belongs to the ferrochelatase family.

The protein localises to the cytoplasm. The enzyme catalyses heme b + 2 H(+) = protoporphyrin IX + Fe(2+). The protein operates within porphyrin-containing compound metabolism; protoheme biosynthesis; protoheme from protoporphyrin-IX: step 1/1. Functionally, catalyzes the ferrous insertion into protoporphyrin IX. The chain is Ferrochelatase from Burkholderia ambifaria (strain MC40-6).